The primary structure comprises 396 residues: uncharacterized protein (396 aa).

This sequence belongs to the NAD(P)-dependent epimerase/dehydratase family. The cofactor is NAD(+). NADP(+) is required as a cofactor.

Its function is as follows. Putative nucleotide sugar epimerase/dehydrogenase. This is an uncharacterized protein from Sinorhizobium fredii (strain NBRC 101917 / NGR234).